The following is a 144-amino-acid chain: UPF0102 protein BURPS1106A_3900 (144 aa).

Positions 1–28 are disordered; the sequence is MCHAREASPGTGEPEAAPRDNFPRAAGS.

Belongs to the UPF0102 family.

The chain is UPF0102 protein BURPS1106A_3900 from Burkholderia pseudomallei (strain 1106a).